The following is a 241-amino-acid chain: Caffeoyl-CoA O-methyltransferase (241 aa).

Residue lysine 14 participates in substrate binding. S-adenosyl-L-methionine is bound by residues threonine 58, glutamate 80, glycine 82–valine 83, serine 88, aspartate 106, and alanine 135. Substrate is bound at residue aspartate 158. An a divalent metal cation-binding site is contributed by aspartate 158. Residue aspartate 160 coordinates S-adenosyl-L-methionine. A divalent metal cation is bound by residues aspartate 184 and asparagine 185.

Belongs to the class I-like SAM-binding methyltransferase superfamily. Cation-dependent O-methyltransferase family. CCoAMT subfamily. Requires a divalent metal cation as cofactor.

It catalyses the reaction (E)-caffeoyl-CoA + S-adenosyl-L-methionine = (E)-feruloyl-CoA + S-adenosyl-L-homocysteine + H(+). It functions in the pathway aromatic compound metabolism; phenylpropanoid biosynthesis. Its function is as follows. Methylates caffeoyl-CoA to feruloyl-CoA and 5-hydroxyferuloyl-CoA to sinapoyl-CoA. Plays a role in the synthesis of feruloylated polysaccharides. Involved in the reinforcement of the plant cell wall. Also involved in the responding to wounding or pathogen challenge by the increased formation of cell wall-bound ferulic acid polymers. This is Caffeoyl-CoA O-methyltransferase from Stellaria longipes (Longstalk starwort).